A 362-amino-acid polypeptide reads, in one-letter code: Glycyl-glycine endopeptidase ALE-1 (362 aa).

An N-terminal signal peptide occupies residues 1–35 (MDTNRKFTLVKSLSIGLGTFLVGSVFLTVNDEASA). The segment at 35-110 (ASTKVDAPKV…PAKADAPKVE (76 aa)) is disordered. Positions 40 to 110 (DAPKVEQEAP…PAKADAPKVE (71 aa)) are enriched in basic and acidic residues. Zn(2+) is bound by residues His-150 and Asp-154. His-231 is a catalytic residue. Residue His-233 participates in Zn(2+) binding. The SH3b domain maps to 282–350 (SESASFTANT…YLPVRTWNES (69 aa)).

Belongs to the peptidase M23B family. The cofactor is Zn(2+).

It localises to the secreted. The enzyme catalyses Hydrolysis of the -Gly-|-Gly- bond in the pentaglycine inter-peptide link joining staphylococcal cell wall peptidoglycans.. Its function is as follows. Lyses staphylococcal cells by hydrolyzing the polyglycine interpeptide bridges of the peptidoglycan. The sequence is that of Glycyl-glycine endopeptidase ALE-1 from Staphylococcus capitis.